The primary structure comprises 2642 residues: Fusarielin synthase FSL1 (2642 aa).

Positions 6 to 450 constitute a Ketosynthase family 3 (KS3) domain; sequence NEPIAIIGTG…GTNAHAILEA (445 aa). Catalysis depends on for beta-ketoacyl synthase activity residues cysteine 179, histidine 318, and histidine 370. The segment at 566-890 is malonyl-CoA:ACP transacylase (MAT) domain; sequence VFTGQGAQWA…PYTSALVRGK (325 aa). Catalysis depends on serine 659, which acts as the For malonyltransferase activity. The interval 965–1101 is N-terminal hotdog fold; it reads HDLLGIQTAD…GKVCIFLQTE (137 aa). Positions 965-1279 are dehydratase (DH) domain; it reads HDLLGIQTAD…SFSPFAAATD (315 aa). Residues 965-1280 enclose the PKS/mFAS DH domain; the sequence is HDLLGIQTAD…FSPFAAATDR (316 aa). Residue histidine 997 is the Proton acceptor; for dehydratase activity of the active site. A C-terminal hotdog fold region spans residues 1126-1280; that stretch reads MAGIDVERFY…FSPFAAATDR (155 aa). The Proton donor; for dehydratase activity role is filled by aspartate 1189. The interval 1423–1622 is methyltransferase (MET) domain; the sequence is NYLDRYYTHA…GVDTNTPMPD (200 aa). Positions 2244 to 2423 are ketoreductase (KR) domain; that stretch reads TYWMLGLTGD…GHNAAVIDIS (180 aa). A Carrier domain is found at 2556-2635; that stretch reads QEVTSVLTSC…DLADYILESL (80 aa). Serine 2595 carries the post-translational modification O-(pantetheine 4'-phosphoryl)serine.

Requires pantetheine 4'-phosphate as cofactor.

The protein operates within secondary metabolite biosynthesis. Functionally, reducing polyketide synthase; part of the gene cluster that mediates the biosynthesis of fusarielins F, G and H, decaketide compounds with 5 methylations and a decaline core that act as mycoestrogens as they stimulate growth of MCF-7 breast cancer cells. The initial compound in the pathway is produced by the reducing polyketide synthase FSL1. FSL1 lacks an active enoyl reductase (ER) domain and biosynthesis of fusarielins relies on the trans-acting enoyl reductase FSL5, before it is released through hydrolysis catalyzed by the thioesterase FSL2. Fusarielins F, G, and H have a C11=C12 cis double bond and is fully reduced between C10 and C11 and between C12 and C13. FSL3 can be involved in the formation of the C11=C12 cis double bond by moving a hypothetical C10=C11 or C12=C13 trans double bond to form prefusarielin. Prefusarielin is oxygenated at C15 and C16 by the cytochrome P450 monooxygenase FSL4, resulting in fusarielin F, which subsequently is epoxidized into fusarielin G by the same enzyme. The final step in the pathway is a reduction of the carboxylic acid moiety to yield fusarielin H via a still undetermined mechanism. The polypeptide is Fusarielin synthase FSL1 (Gibberella zeae (strain ATCC MYA-4620 / CBS 123657 / FGSC 9075 / NRRL 31084 / PH-1) (Wheat head blight fungus)).